Consider the following 230-residue polypeptide: Cytidylate kinase (230 aa).

Residue 10-18 participates in ATP binding; it reads GPAGSGKST.

The protein belongs to the cytidylate kinase family. Type 1 subfamily.

The protein localises to the cytoplasm. It catalyses the reaction CMP + ATP = CDP + ADP. The catalysed reaction is dCMP + ATP = dCDP + ADP. The sequence is that of Cytidylate kinase from Leptospira borgpetersenii serovar Hardjo-bovis (strain JB197).